The primary structure comprises 87 residues: MNSKIFAVLLLLGLLSCVLSDQYCPKSSITACKKMNTRNDCCKDDDCTGGSWCCATPCGNFCKYPTDRPGGKRAAGGKSCKTGYVYY.

Residues M1 to S20 form the signal peptide. A WAP domain is found at D21–T66. 5 disulfides stabilise this stretch: C24-C54, C32-C58, C41-C53, C42-C80, and C47-C62.

Belongs to the venom protein 11 family. 01 (wap-1) subfamily. In terms of processing, contains 5 disulfide bonds. In terms of tissue distribution, expressed by the venom gland.

The protein localises to the secreted. Has antibacterial activity. This chain is U15-lycotoxin-Ls1h, found in Lycosa singoriensis (Wolf spider).